Here is a 475-residue protein sequence, read N- to C-terminus: Actin-related protein 10 (475 aa).

This sequence belongs to the actin family.

It localises to the cytoplasm. Its subcellular location is the cytoskeleton. The chain is Actin-related protein 10 from Dictyostelium discoideum (Social amoeba).